Reading from the N-terminus, the 531-residue chain is CTP synthase (531 aa).

The amidoligase domain stretch occupies residues 1-267 (MTKYIFVTGG…DQIVCEHLRL (267 aa)). S13 contributes to the CTP binding site. S13 is a UTP binding site. Position 14-19 (14-19 (SLGKGI)) interacts with ATP. Residue Y54 participates in L-glutamine binding. D71 serves as a coordination point for ATP. Residues D71 and E141 each coordinate Mg(2+). CTP is bound by residues 148-150 (DIE), 188-193 (KTKPTQ), and K224. Residues 188–193 (KTKPTQ) and K224 contribute to the UTP site. ATP is bound at residue 240-242 (RDA). In terms of domain architecture, Glutamine amidotransferase type-1 spans 292–531 (KIALVGKYVE…REFVRASLKE (240 aa)). Residue G354 coordinates L-glutamine. Catalysis depends on C381, which acts as the Nucleophile; for glutamine hydrolysis. Residues 382–385 (LGMQ), E405, and R462 contribute to the L-glutamine site. Catalysis depends on residues H507 and E509.

It belongs to the CTP synthase family. In terms of assembly, homotetramer.

The enzyme catalyses UTP + L-glutamine + ATP + H2O = CTP + L-glutamate + ADP + phosphate + 2 H(+). It carries out the reaction L-glutamine + H2O = L-glutamate + NH4(+). The catalysed reaction is UTP + NH4(+) + ATP = CTP + ADP + phosphate + 2 H(+). It functions in the pathway pyrimidine metabolism; CTP biosynthesis via de novo pathway; CTP from UDP: step 2/2. Its activity is regulated as follows. Allosterically activated by GTP, when glutamine is the substrate; GTP has no effect on the reaction when ammonia is the substrate. The allosteric effector GTP functions by stabilizing the protein conformation that binds the tetrahedral intermediate(s) formed during glutamine hydrolysis. Inhibited by the product CTP, via allosteric rather than competitive inhibition. Functionally, catalyzes the ATP-dependent amination of UTP to CTP with either L-glutamine or ammonia as the source of nitrogen. Regulates intracellular CTP levels through interactions with the four ribonucleotide triphosphates. The sequence is that of CTP synthase from Geobacillus kaustophilus (strain HTA426).